Reading from the N-terminus, the 256-residue chain is Small ribosomal subunit protein eS1 (256 aa).

Residues 1–18 (MAVGKNKRLSKGKKGLKK) show a composition bias toward basic residues. The segment at 1–20 (MAVGKNKRLSKGKKGLKKKA) is disordered. Ala2 is modified (N-acetylalanine; partial).

It belongs to the eukaryotic ribosomal protein eS1 family. As to quaternary structure, component of the small ribosomal subunit. Mature ribosomes consist of a small (40S) and a large (60S) subunit. The 40S subunit contains about 33 different proteins and 1 molecule of RNA (18S). The 60S subunit contains about 49 different proteins and 3 molecules of RNA (25S, 5.8S and 5S).

Its subcellular location is the cytoplasm. This chain is Small ribosomal subunit protein eS1, found in Podospora anserina (strain S / ATCC MYA-4624 / DSM 980 / FGSC 10383) (Pleurage anserina).